The sequence spans 597 residues: Elongation factor 4 (597 aa).

The tr-type G domain occupies 2–184 (QNIRNFSIIA…DIVKKIPAPE (183 aa)). Residues 14 to 19 (DHGKST) and 131 to 134 (NKID) contribute to the GTP site.

This sequence belongs to the TRAFAC class translation factor GTPase superfamily. Classic translation factor GTPase family. LepA subfamily.

The protein localises to the cell inner membrane. It carries out the reaction GTP + H2O = GDP + phosphate + H(+). In terms of biological role, required for accurate and efficient protein synthesis under certain stress conditions. May act as a fidelity factor of the translation reaction, by catalyzing a one-codon backward translocation of tRNAs on improperly translocated ribosomes. Back-translocation proceeds from a post-translocation (POST) complex to a pre-translocation (PRE) complex, thus giving elongation factor G a second chance to translocate the tRNAs correctly. Binds to ribosomes in a GTP-dependent manner. In Haemophilus ducreyi (strain 35000HP / ATCC 700724), this protein is Elongation factor 4.